An 880-amino-acid chain; its full sequence is Translation initiation factor IF-2 (880 aa).

A disordered region spans residues 259-281 (KNREEARAVGRSSKSQSKRKSST). One can recognise a tr-type G domain in the interval 379–548 (SRAPVVTIMG…LLQAEVLELK (170 aa)). A G1 region spans residues 388–395 (GHVDHGKT). Residue 388–395 (GHVDHGKT) coordinates GTP. A G2 region spans residues 413-417 (GITQH). The segment at 434-437 (DTPG) is G3. Residues 434-438 (DTPGH) and 488-491 (NKID) contribute to the GTP site. The tract at residues 488 to 491 (NKID) is G4. The G5 stretch occupies residues 524-526 (SAK).

It belongs to the TRAFAC class translation factor GTPase superfamily. Classic translation factor GTPase family. IF-2 subfamily.

It is found in the cytoplasm. Functionally, one of the essential components for the initiation of protein synthesis. Protects formylmethionyl-tRNA from spontaneous hydrolysis and promotes its binding to the 30S ribosomal subunits. Also involved in the hydrolysis of GTP during the formation of the 70S ribosomal complex. The protein is Translation initiation factor IF-2 of Baumannia cicadellinicola subsp. Homalodisca coagulata.